A 414-amino-acid polypeptide reads, in one-letter code: Serpin A3-6 (414 aa).

An N-terminal signal peptide occupies residues 1 to 25 (MRTERVSPLLALGILVAGLCSRVHC). Residues asparagine 103, asparagine 183, asparagine 233, asparagine 267, and asparagine 321 are each glycosylated (N-linked (GlcNAc...) asparagine).

This sequence belongs to the serpin family. Homodimer.

The protein localises to the cytoplasmic vesicle. Its subcellular location is the secretory vesicle. The protein resides in the chromaffin granule. It localises to the secreted. Its function is as follows. Serine protease inhibitor. The sequence is that of Serpin A3-6 from Bos taurus (Bovine).